Here is an 824-residue protein sequence, read N- to C-terminus: E3 ubiquitin-protein ligase TRIM71 (824 aa).

Residues cysteine 23–aspartate 93 form an RING-type zinc finger. The tract at residues serine 37 to serine 56 is disordered. The segment at leucine 147–leucine 194 adopts a B box-type 1; atypical zinc-finger fold. Positions 152, 155, 176, 180, 234, 237, 257, and 262 each coordinate Zn(2+). Residues glutamate 229–leucine 270 form a B box-type 2 zinc finger. Positions glutamine 293–lysine 321 form a coiled coil. The Filamin repeat unit spans residues serine 435–valine 536. 6 NHL repeats span residues methionine 549 to cysteine 592, histidine 596 to aspartate 639, leucine 643 to aspartate 686, leucine 690 to aspartate 733, alanine 737 to asparagine 780, and leucine 784 to phenylalanine 824.

The protein belongs to the TRIM/RBCC family.

It is found in the cytoplasm. It localises to the P-body. It catalyses the reaction S-ubiquitinyl-[E2 ubiquitin-conjugating enzyme]-L-cysteine + [acceptor protein]-L-lysine = [E2 ubiquitin-conjugating enzyme]-L-cysteine + N(6)-ubiquitinyl-[acceptor protein]-L-lysine.. It participates in protein modification; protein ubiquitination. E3 ubiquitin-protein ligase that cooperates with the microRNAs (miRNAs) machinery and promotes embryonic stem cells proliferation and maintenance. Binds to miRNAs and participates in post-transcriptional repression of transcripts. Required to maintain proliferation and prevent premature differentiation of neural progenitor cells during early neural development. The chain is E3 ubiquitin-protein ligase TRIM71 (trim71) from Danio rerio (Zebrafish).